The chain runs to 139 residues: Arsenate reductase (139 aa).

Residues C10, C82, and C89 each act as nucleophile in the active site. Cystine bridges form between C10–C82 and C82–C89.

The protein belongs to the low molecular weight phosphotyrosine protein phosphatase family. Thioredoxin-coupled ArsC subfamily.

The protein localises to the cytoplasm. The enzyme catalyses arsenate + [thioredoxin]-dithiol + H(+) = arsenite + [thioredoxin]-disulfide + H2O. In terms of biological role, catalyzes the reduction of arsenate [As(V)] to arsenite [As(III)]. This Oceanobacillus iheyensis (strain DSM 14371 / CIP 107618 / JCM 11309 / KCTC 3954 / HTE831) protein is Arsenate reductase.